Reading from the N-terminus, the 298-residue chain is Elongation factor Ts (298 aa).

The involved in Mg(2+) ion dislocation from EF-Tu stretch occupies residues 79–82; sequence TDFV.

It belongs to the EF-Ts family.

It is found in the cytoplasm. Functionally, associates with the EF-Tu.GDP complex and induces the exchange of GDP to GTP. It remains bound to the aminoacyl-tRNA.EF-Tu.GTP complex up to the GTP hydrolysis stage on the ribosome. The polypeptide is Elongation factor Ts (tsf) (Mycoplasma pneumoniae (strain ATCC 29342 / M129 / Subtype 1) (Mycoplasmoides pneumoniae)).